A 463-amino-acid polypeptide reads, in one-letter code: Cysteine--tRNA ligase (463 aa).

Cysteine 29 contacts Zn(2+). The 'HIGH' region motif lies at 31-41 (PTVYDFAHIGN). Zn(2+) is bound by residues cysteine 227, histidine 252, and glutamate 256. The 'KMSKS' region signature appears at 285 to 289 (KMSKS). Residue lysine 288 participates in ATP binding.

It belongs to the class-I aminoacyl-tRNA synthetase family. Monomer. Zn(2+) is required as a cofactor.

It localises to the cytoplasm. The catalysed reaction is tRNA(Cys) + L-cysteine + ATP = L-cysteinyl-tRNA(Cys) + AMP + diphosphate. The polypeptide is Cysteine--tRNA ligase (Rhodopseudomonas palustris (strain ATCC BAA-98 / CGA009)).